A 388-amino-acid chain; its full sequence is Yellow-related salivary protein SP03 (388 aa).

The signal sequence occupies residues 1–18; the sequence is MKIFLCLIAVVSLQGVLA. Residue asparagine 29 is glycosylated (N-linked (GlcNAc...) asparagine).

This sequence belongs to the major royal jelly protein family. As to expression, female salivary gland (at protein level).

The protein localises to the secreted. Functionally, probably modulates blood feeding of sand flies on vertebrate species by binding and sequestering different mediators involved in the host response. Binds biogenic amines. Binds noradrenaline with medium affinity. Binds octopamine with low affinity. Poorly binds histamine, adrenaline and serotonin. This chain is Yellow-related salivary protein SP03, found in Phlebotomus perniciosus (Phlebotomine sand fly).